The sequence spans 257 residues: UPF0246 protein A1S_2267 (257 aa).

This sequence belongs to the UPF0246 family.

The protein is UPF0246 protein A1S_2267 of Acinetobacter baumannii (strain ATCC 17978 / DSM 105126 / CIP 53.77 / LMG 1025 / NCDC KC755 / 5377).